A 188-amino-acid chain; its full sequence is Proline-rich protein 3 (188 aa).

The tract at residues 1-157 (MPKRKKQNQH…DPQVMEDKSD (157 aa)) is disordered. Pro residues-rich tracts occupy residues 35–46 (IGPPSLLGPPPM) and 69–82 (LIPP…PPWG). Positions 83–96 (RGPIRRGLGPRSSP) are enriched in low complexity. The segment covering 145 to 157 (PKDDPQVMEDKSD) has biased composition (basic and acidic residues). The C3H1-type zinc finger occupies 155–183 (KSDRPVCRHFAKKGHCRYEDLCAFYHPGV).

The sequence is that of Proline-rich protein 3 (PRR3) from Pan troglodytes (Chimpanzee).